The following is a 357-amino-acid chain: Probable xyloglucan endotransglucosylase/hydrolase protein 29 (357 aa).

A signal peptide spans 1–31 (MRDSIYLLWIDNRLVVIIMMVMMVSCRCVLG). A GH16 domain is found at 32 to 232 (LENINPIFFD…YTFSPFVSEF (201 aa)). Catalysis depends on E117, which acts as the Nucleophile. The Proton donor role is filled by E121. Xyloglucan contacts are provided by residues E121 and 134 to 136 (QTN). A glycan (N-linked (GlcNAc...) asparagine) is linked at N140. Residues 144 to 148 (NRGRE), 211 to 212 (SW), and G216 each bind xyloglucan. N-linked (GlcNAc...) asparagine glycans are attached at residues N241 and N262. A disulfide bond links C299 and C312. Residue R304 participates in xyloglucan binding. The segment at 326–357 (GRLKFGGSHPKVHKARKKRRRNRSTPVVSADL) is disordered. The segment covering 335–348 (PKVHKARKKRRRNR) has biased composition (basic residues). Residue N347 is glycosylated (N-linked (GlcNAc...) asparagine).

The protein belongs to the glycosyl hydrolase 16 family. XTH group 3 subfamily. Contains at least one intrachain disulfide bond essential for its enzymatic activity.

Its subcellular location is the secreted. The protein localises to the cell wall. It localises to the extracellular space. The protein resides in the apoplast. The catalysed reaction is breaks a beta-(1-&gt;4) bond in the backbone of a xyloglucan and transfers the xyloglucanyl segment on to O-4 of the non-reducing terminal glucose residue of an acceptor, which can be a xyloglucan or an oligosaccharide of xyloglucan.. Functionally, catalyzes xyloglucan endohydrolysis (XEH) and/or endotransglycosylation (XET). Cleaves and religates xyloglucan polymers, an essential constituent of the primary cell wall, and thereby participates in cell wall construction of growing tissues. The sequence is that of Probable xyloglucan endotransglucosylase/hydrolase protein 29 (XTH29) from Arabidopsis thaliana (Mouse-ear cress).